Consider the following 239-residue polypeptide: Sugar fermentation stimulation protein homolog (239 aa).

Belongs to the SfsA family.

The chain is Sugar fermentation stimulation protein homolog from Sinorhizobium medicae (strain WSM419) (Ensifer medicae).